Consider the following 515-residue polypeptide: 2,3-bisphosphoglycerate-independent phosphoglycerate mutase (515 aa).

The Mn(2+) site is built by Asp-14 and Ser-64. Residue Ser-64 is the Phosphoserine intermediate of the active site. Substrate-binding positions include His-125, 155-156, Arg-187, Arg-193, 263-266, and Lys-337; these read RD and RADR. Mn(2+)-binding residues include Asp-404, His-408, Asp-445, His-446, and His-464.

Belongs to the BPG-independent phosphoglycerate mutase family. As to quaternary structure, monomer. Mn(2+) is required as a cofactor.

The catalysed reaction is (2R)-2-phosphoglycerate = (2R)-3-phosphoglycerate. It participates in carbohydrate degradation; glycolysis; pyruvate from D-glyceraldehyde 3-phosphate: step 3/5. In terms of biological role, catalyzes the interconversion of 2-phosphoglycerate and 3-phosphoglycerate. The protein is 2,3-bisphosphoglycerate-independent phosphoglycerate mutase of Pseudomonas aeruginosa (strain UCBPP-PA14).